The chain runs to 79 residues: Putative antitoxin MM_2475 (79 aa).

Belongs to the UPF0330 family.

Its function is as follows. Possibly the antitoxin component of a type II toxin-antitoxin (TA) system. This is Putative antitoxin MM_2475 from Methanosarcina mazei (strain ATCC BAA-159 / DSM 3647 / Goe1 / Go1 / JCM 11833 / OCM 88) (Methanosarcina frisia).